A 54-amino-acid polypeptide reads, in one-letter code: SCTEKTCPGTETCCTTPQGEEGCCPYKEGVCCLDGIHCCPSGTVCDEDHRRCIQ.

The protein belongs to the granulin family. Six disulfide bonds are present. Brain.

The protein localises to the secreted. The polypeptide is Pars intercerebralis major peptide D1 (Locusta migratoria (Migratory locust)).